A 304-amino-acid chain; its full sequence is WW domain-binding protein 1 (304 aa).

A disordered region spans residues Met1–Pro26. Short sequence motifs (PPxY motif) lie at residues Pro159 to Tyr162 and Pro172 to Tyr176. Disordered regions lie at residues Thr206–Pro235 and Cys252–Pro304. The span at Glu209 to Leu218 shows a compositional bias: polar residues.

Binds to the WW domain of YAP1, WWP1 and WWP2. Interacts with WWOX. Interacts with NEDD4.

The sequence is that of WW domain-binding protein 1 (Wbp1) from Mus musculus (Mouse).